The primary structure comprises 156 residues: Small ribosomal subunit protein uS7 (156 aa).

Belongs to the universal ribosomal protein uS7 family. As to quaternary structure, part of the 30S ribosomal subunit. Contacts proteins S9 and S11.

Functionally, one of the primary rRNA binding proteins, it binds directly to 16S rRNA where it nucleates assembly of the head domain of the 30S subunit. Is located at the subunit interface close to the decoding center, probably blocks exit of the E-site tRNA. In Saccharophagus degradans (strain 2-40 / ATCC 43961 / DSM 17024), this protein is Small ribosomal subunit protein uS7.